We begin with the raw amino-acid sequence, 173 residues long: Crossover junction endodeoxyribonuclease RuvC (173 aa).

Active-site residues include Asp-8, Glu-69, and Asp-141. Asp-8, Glu-69, and Asp-141 together coordinate Mg(2+).

Belongs to the RuvC family. Homodimer which binds Holliday junction (HJ) DNA. The HJ becomes 2-fold symmetrical on binding to RuvC with unstacked arms; it has a different conformation from HJ DNA in complex with RuvA. In the full resolvosome a probable DNA-RuvA(4)-RuvB(12)-RuvC(2) complex forms which resolves the HJ. Requires Mg(2+) as cofactor.

The protein localises to the cytoplasm. It catalyses the reaction Endonucleolytic cleavage at a junction such as a reciprocal single-stranded crossover between two homologous DNA duplexes (Holliday junction).. The RuvA-RuvB-RuvC complex processes Holliday junction (HJ) DNA during genetic recombination and DNA repair. Endonuclease that resolves HJ intermediates. Cleaves cruciform DNA by making single-stranded nicks across the HJ at symmetrical positions within the homologous arms, yielding a 5'-phosphate and a 3'-hydroxyl group; requires a central core of homology in the junction. The consensus cleavage sequence is 5'-(A/T)TT(C/G)-3'. Cleavage occurs on the 3'-side of the TT dinucleotide at the point of strand exchange. HJ branch migration catalyzed by RuvA-RuvB allows RuvC to scan DNA until it finds its consensus sequence, where it cleaves and resolves the cruciform DNA. This Stenotrophomonas maltophilia (strain K279a) protein is Crossover junction endodeoxyribonuclease RuvC.